The chain runs to 287 residues: Nitrogenase iron protein (287 aa).

An ATP-binding site is contributed by 8 to 15 (GKGGIGKS). Residue Cys96 coordinates [4Fe-4S] cluster. The residue at position 99 (Arg99) is an ADP-ribosylarginine; by dinitrogenase reductase ADP-ribosyltransferase. Residue Cys130 coordinates [4Fe-4S] cluster.

The protein belongs to the NifH/BchL/ChlL family. As to quaternary structure, homodimer. The cofactor is [4Fe-4S] cluster. The reversible ADP-ribosylation of Arg-99 inactivates the nitrogenase reductase and regulates nitrogenase activity.

The catalysed reaction is N2 + 8 reduced [2Fe-2S]-[ferredoxin] + 16 ATP + 16 H2O = H2 + 8 oxidized [2Fe-2S]-[ferredoxin] + 2 NH4(+) + 16 ADP + 16 phosphate + 6 H(+). The key enzymatic reactions in nitrogen fixation are catalyzed by the nitrogenase complex, which has 2 components: the iron protein and the molybdenum-iron protein. The protein is Nitrogenase iron protein of Frankia casuarinae (strain DSM 45818 / CECT 9043 / HFP020203 / CcI3).